Here is a 93-residue protein sequence, read N- to C-terminus: Alpha-conotoxin-like Ms20.1 (93 aa).

The first 23 residues, 1-23 (MLKLEMMLVVLLILPLFYFDAGG), serve as a signal peptide directing secretion. The propeptide occupies 24 to 45 (QVVQRDWRSDGLARYLQRGDRD). Residue Glu-48 is modified to 4-carboxyglutamate. 4-hydroxyproline is present on Pro-54. 4 disulfide bridges follow: Cys-62–Cys-71, Cys-67–Cys-79, Cys-72–Cys-89, and Cys-77–Cys-91.

Belongs to the conotoxin D superfamily. In terms of assembly, hetero-, homo- or pseudo-homodimer (identical sequence, different post-translational modifications). Heterodimer of [carboxyGlu-48, hydroxyPro-54]Ms20.1 and [carboxy'Glu-50', hydroxy'Pro-56']Ms20.4 may exist. Expressed by the venom duct.

It localises to the secreted. Functionally, alpha-conotoxins act on postsynaptic membranes, they bind to the nicotinic acetylcholine receptors (nAChR) and thus inhibit them. Through its two C-terminal domains, this homodimeric protein would bind to two nAChR allosteric sites, located outside the nAChR C-loop of the principal binding face and at the adjacent binding interface in a clockwise direction. This toxin specifically blocks mammalian neuronal nAChR of the alpha-7/CHRNA7, alpha-3-beta-2/CHRNA3-CHRNB2 and alpha-4-beta-2/CHRNA4-CHRNB2 subtypes. This chain is Alpha-conotoxin-like Ms20.1, found in Conus mustelinus (Weasel cone).